The following is a 1049-amino-acid chain: Toll-like receptor 7 (1049 aa).

The first 26 residues, 1–26 (MVFPMWTLKRQILILFNIILISKLLG), serve as a signal peptide directing secretion. Over 27 to 839 (ARWFPKTLPC…LYTCELDLTN (813 aa)) the chain is Extracellular. 6 LRR repeats span residues 43–64 (PKNHVIVDCTDKHLTEIPGGIP), 65–87 (TNTTNLTLTINHIPDISPASFHR), 110–126 (NMCIKRLQIKPRSFSGL), 127–149 (TYLKSLYLDGNQLLEIPQGLPPS), 151–170 (QLLSLEANNIFSIRKENLTE), and 171–195 (LANIEILYLGQNCYYRNPCYVSYSI). N-linked (GlcNAc...) asparagine glycosylation is found at asparagine 66 and asparagine 69. Asparagine 167 carries N-linked (GlcNAc...) asparagine glycosylation. N-linked (GlcNAc...) asparagine glycans are attached at residues asparagine 202 and asparagine 215. LRR repeat units lie at residues 203–226 (LTKLKVLSLKDNNVTAVPTVLPST), 228–247 (TELYLYNNMIAKIQEDDFNN), 248–275 (LNQLQILDLSGNCPRCYNAPFPCAPCKN), 289–312 (LTELKVLRLHSNSLQHVPPRWFKN), 314–337 (NKLQELDLSQNFLAKEIGDAKFLH), 339–368 (LPSLIQLDLSFNFELQVYRASMNLSQAFSS), 369–392 (LKSLKILRIRGYVFKELKSFNLSP), 396–419 (LQNLEVLDLGTNFIKIANLSMFKQ), and 421–443 (KRLKVIDLSVNKISPSGDSSEVG). Asparagine 361 carries an N-linked (GlcNAc...) asparagine glycan. Asparagine 413 carries an N-linked (GlcNAc...) asparagine glycan. N-linked (GlcNAc...) asparagine glycosylation is present at asparagine 488. LRR repeat units follow at residues 492 to 515 (YKYGQTLDLSKNSIFFVKSSDFQH), 516 to 540 (LSFLKCLNLSGNLISQTLNGSEFQP), 541 to 564 (LAELRYLDFSNNRLDLLHSTAFEE), and 566 to 588 (HKLEVLDISSNSHYFQSEGITHM). 2 N-linked (GlcNAc...) asparagine glycosylation sites follow: asparagine 523 and asparagine 534. Residue asparagine 590 is glycosylated (N-linked (GlcNAc...) asparagine). LRR repeat units follow at residues 595 to 618 (LKVLQKLMMNDNDISSSTSRTMES), 619 to 644 (ESLRTLEFRGNHLDVLWREGDNRYLQ), 649 to 672 (LLKLEELDISKNSLSFLPSGVFDG), 674 to 697 (PPNLKNLSLAKNGLKSFSWKKLQC), 698 to 721 (LKNLETLDLSHNQLTTVPERLSNC), 723 to 745 (RSLKNLILKNNQIRSLTKYFLQD), 746 to 769 (AFQLRYLDLSSNKIQMIQKTSFPE), and 772 to 795 (LNNLKMLLLHHNRFLCTCDAVWFV). N-linked (GlcNAc...) asparagine glycans are attached at residues asparagine 679 and asparagine 720. An N-linked (GlcNAc...) asparagine glycan is attached at asparagine 799. Residues 840–860 (LILFSLSISVSLFLMVMMTAS) traverse the membrane as a helical segment. At 861 to 1049 (HLYFWDVWYI…AYSQVFKETV (189 aa)) the chain is on the cytoplasmic side. Positions 889–1033 (CCYDAFIVYD…YFWQCLKNAL (145 aa)) constitute a TIR domain.

Belongs to the Toll-like receptor family. Homodimer. Interacts with MYD88 via their respective TIR domains. Interacts with UNC93B1. Interacts with SMPDL3B. As to expression, detected in brain, placenta, spleen, stomach, small intestine, lung and in plasmacytoid pre-dendritic cells. Expressed in peripheral mononuclear blood cells.

The protein resides in the endoplasmic reticulum membrane. Its subcellular location is the endosome. The protein localises to the lysosome. It localises to the cytoplasmic vesicle. It is found in the phagosome. Activated by guanosine analogs including deoxyguanosine, 7-thia-8-oxoguanosine or 7-deazaguanosine in a RNA-independent manner. Activated by imiquimod. Its function is as follows. Endosomal receptor that plays a key role in innate and adaptive immunity. Controls host immune response against pathogens through recognition of uridine-containing single strand RNAs (ssRNAs) of viral origin or guanosine analogs. Upon binding to agonists, undergoes dimerization that brings TIR domains from the two molecules into direct contact, leading to the recruitment of TIR-containing downstream adapter MYD88 through homotypic interaction. In turn, the Myddosome signaling complex is formed involving IRAK4, IRAK1, TRAF6, TRAF3 leading to activation of downstream transcription factors NF-kappa-B and IRF7 to induce pro-inflammatory cytokines and interferons, respectively. In plasmacytoid dendritic cells, RNASET2 endonuclease cooperates with PLD3 or PLD4 5'-&gt;3' exonucleases to process RNA and release 2',3'-cyclic guanosine monophosphate (2',3'-cGMP) and cytidine-rich RNA fragments that occupy TLR7 ligand-binding pockets and trigger a signaling-competent state. The polypeptide is Toll-like receptor 7 (Homo sapiens (Human)).